Consider the following 992-residue polypeptide: Epstein-Barr nuclear antigen 6 (992 aa).

The interval Met-1–Met-70 is disordered. Residues Gln-12–Asp-31 are compositionally biased toward basic and acidic residues. The segment at Leu-130–Pro-159 is interaction with host PIM1. Disordered stretches follow at residues Ala-355 to Ala-905, Pro-931 to Cys-954, and Asp-967 to Asp-992. Acidic residues predominate over residues Val-381–Pro-391. The segment covering Ala-445–Thr-461 has biased composition (polar residues). The segment covering Gln-479–Pro-495 has biased composition (pro residues). Acidic residues predominate over residues Tyr-506 to Glu-520. Residues Pro-551–Ser-555 form a 1-1; approximate repeat. The tract at residues Pro-551–Gly-610 is 12 X 5 AA approximate tandem repeats of P-P-A-A-G. One copy of the 2-1; approximate repeat lies at Pro-556–Gly-560. Residues Pro-561 to Gly-565 form a 3-1; approximate repeat. Residues Ala-563–Ala-594 show a composition bias toward pro residues. Repeat copies occupy residues Pro-566–Gly-570, Pro-571–Gly-575, Pro-576–Gly-580, Pro-581–Gly-585, Pro-586–Gly-590, and Pro-591–Gly-595. The segment covering Gly-595–Pro-611 has biased composition (low complexity). The stretch at Pro-596–Ala-600 is one 10-1; approximate repeat. An 11-1; approximate repeat occupies Pro-601–Gly-605. Residues Pro-606 to Gly-610 form a 12-1 repeat. 2 stretches are compositionally biased toward polar residues: residues Thr-659 to Thr-676 and Ile-700 to Ile-714. Residues Ser-715 to Asp-724 are compositionally biased toward basic and acidic residues. 2 stretches are compositionally biased toward low complexity: residues Ala-738–Gln-764 and Pro-772–Ala-781. Repeat copies occupy residues Pro-741 to Pro-753, Pro-754 to Pro-766, and Pro-767 to Pro-779. The tract at residues Pro-741–Pro-779 is 3 X 13 AA tandem repeats of P-[AP]-P-Q-A-P-Y-Q-G-Y-Q-E-P. Residues Asp-845–Thr-857 are compositionally biased toward polar residues. A compositionally biased stretch (low complexity) spans Pro-859 to Gln-881. Residues Pro-882–Pro-899 show a composition bias toward pro residues.

This sequence belongs to the herpesviridae EBNA-6 family. As to quaternary structure, interacts with host CTPB1; this interaction leads to gene repression, but also seems to interfere with the repressive function of CtBP pre-bound to DNA, leading to EBNA6 mediated up-regulation of many host genes. Interacts with host MYC; this interaction enhances MYC stability. Interacts (via N-terminus) with host RBPJ. Interacts (via N-terminus) with host histone H2AX; this interaction facilitates H2AX proteasomal degradation. Interacts with host TP73; this interaction inhibits TP73-mediated apoptotic pathway. Interacts (via N-terminus) with host PIM1; this interaction upregulates and stabilizes PIM1 and induces cell proliferation by inhibiting the growth suppressive properties of p21.

Its subcellular location is the host nucleus. The protein resides in the host nucleus matrix. Its function is as follows. Plays an essential role for the activation and immortalization of human B-cells. Represses transcription of viral promoters TP1 and Cp through interaction with host RBPJ, and inhibits EBNA2-mediated activation of these promoters. Targets host chromatin through interactions with host transcription factors, especially RBPJ and IRF4. Alternatively, EBNA6 also regulates the transcription of the EBV oncogene LMP1 in a cell cycle-dependent manner. Modulates the activity of several host proteins involved in cell cycle regulation including host cyclin A, MYC, RB, p21 and p27 mainly through binding to the host SCF(SKP2) complex. Inhibits the promoter of host H2AX and targets H2AX to proteasomal degradation in order to promote latency and cell proliferation. Upregulates host PIM1 expression and stabilization. Potentiates PIM1 to promote cell proliferation by inhibiting the growth suppressive properties of p21. This chain is Epstein-Barr nuclear antigen 6 (EBNA6), found in Epstein-Barr virus (strain B95-8) (HHV-4).